The chain runs to 315 residues: Homoserine kinase (315 aa).

Residue 97 to 107 (PPARGLGSSAT) coordinates ATP.

Belongs to the GHMP kinase family. Homoserine kinase subfamily.

It localises to the cytoplasm. The enzyme catalyses L-homoserine + ATP = O-phospho-L-homoserine + ADP + H(+). It participates in amino-acid biosynthesis; L-threonine biosynthesis; L-threonine from L-aspartate: step 4/5. Functionally, catalyzes the ATP-dependent phosphorylation of L-homoserine to L-homoserine phosphate. This Synechococcus sp. (strain CC9902) protein is Homoserine kinase.